Consider the following 133-residue polypeptide: MTSAVPATSLILWLAVALGGALGALARYSVSIAWMPAQLKFPVATLTVNVLGSFLMGVFYVVIVEKAMLAPVWRHVIMIGFLGAFTTFSTFSIESLHLWQSGHWQIAISYVVANVVLSISAVVVAIVLTEKLV.

The next 4 helical transmembrane spans lie at 5–25 (VPAT…LGAL), 43–63 (VATL…YVVI), 76–96 (VIMI…IESL), and 108–128 (ISYV…AIVL). Na(+) is bound by residues G83 and T86.

This sequence belongs to the fluoride channel Fluc/FEX (TC 1.A.43) family.

The protein resides in the cell inner membrane. The catalysed reaction is fluoride(in) = fluoride(out). Its activity is regulated as follows. Na(+) is not transported, but it plays an essential structural role and its presence is essential for fluoride channel function. Fluoride-specific ion channel. Important for reducing fluoride concentration in the cell, thus reducing its toxicity. The polypeptide is Fluoride-specific ion channel FluC (Saccharophagus degradans (strain 2-40 / ATCC 43961 / DSM 17024)).